Consider the following 100-residue polypeptide: Integration host factor subunit alpha (100 aa).

Belongs to the bacterial histone-like protein family. As to quaternary structure, heterodimer of an alpha and a beta chain.

In terms of biological role, this protein is one of the two subunits of integration host factor, a specific DNA-binding protein that functions in genetic recombination as well as in transcriptional and translational control. The sequence is that of Integration host factor subunit alpha from Methylobacillus flagellatus (strain ATCC 51484 / DSM 6875 / VKM B-1610 / KT).